We begin with the raw amino-acid sequence, 201 residues long: Protease (201 aa).

Residues His56, Asp73, and Cys121 contribute to the active site.

This sequence belongs to the peptidase C5 family. Interacts with protease cofactor pVI-C; this interaction is necessary for protease activation.

The protein resides in the virion. It localises to the host nucleus. The enzyme catalyses Cleaves proteins of the adenovirus and its host cell at two consensus sites: -Yaa-Xaa-Gly-Gly-|-Xaa- and -Yaa-Xaa-Gly-Xaa-|-Gly- (in which Yaa is Met, Ile or Leu, and Xaa is any amino acid).. Its activity is regulated as follows. Requires DNA and protease cofactor for maximal activation. Inside nascent virions, becomes partially activated by binding to the viral DNA, allowing it to cleave the cofactor that binds to the protease and fully activates it. Actin, like the viral protease cofactor, seems to act as a cofactor in the cleavage of cytokeratin 18 and of actin itself. Cleaves viral precursor proteins (pTP, pIIIa, pVI, pVII, pVIII, and pX) inside newly assembled particles giving rise to mature virions. Protease complexed to its cofactor slides along the viral DNA to specifically locate and cleave the viral precursors. Mature virions have a weakened organization compared to the unmature virions, thereby facilitating subsequent uncoating. Without maturation, the particle lacks infectivity and is unable to uncoat. Late in adenovirus infection, in the cytoplasm, may participate in the cytoskeleton destruction. Cleaves host cell cytoskeletal keratins K7 and K18. This Homo sapiens (Human) protein is Protease.